Consider the following 186-residue polypeptide: Catechol O-methyltransferase (186 aa).

S-adenosyl-L-methionine contacts are provided by residues valine 7, glutamate 29, serine 37, glutamate 55, leucine 56, 82–85 (GASQ), serine 84, and aspartate 106. Residue aspartate 106 coordinates Mg(2+). Lysine 109 provides a ligand contact to substrate. 2 residues coordinate Mg(2+): aspartate 134 and asparagine 135. Substrate contacts are provided by asparagine 135 and glutamate 164. Serine 182 is modified (phosphoserine).

It belongs to the class I-like SAM-binding methyltransferase superfamily. Cation-dependent O-methyltransferase family. Mg(2+) serves as cofactor.

Its subcellular location is the cytoplasm. It localises to the cell membrane. The catalysed reaction is a catechol + S-adenosyl-L-methionine = a guaiacol + S-adenosyl-L-homocysteine + H(+). It catalyses the reaction 2-hydroxyestrone + S-adenosyl-L-methionine = 2-hydroxy-3-methoxy-estrone + S-adenosyl-L-homocysteine + H(+). It carries out the reaction 4-hydroxyestrone + S-adenosyl-L-methionine = 4-methoxyestrone + S-adenosyl-L-homocysteine + H(+). The enzyme catalyses 2-hydroxyestrone + S-adenosyl-L-methionine = 2-methoxyestrone + S-adenosyl-L-homocysteine + H(+). The catalysed reaction is 4-hydroxy-17beta-estradiol + S-adenosyl-L-methionine = 4-methoxy-17beta-estradiol + S-adenosyl-L-homocysteine + H(+). It catalyses the reaction 2-hydroxy-17beta-estradiol + S-adenosyl-L-methionine = 2-hydroxy-3-methoxy-17beta-estradiol + S-adenosyl-L-homocysteine + H(+). It carries out the reaction 2-hydroxy-17beta-estradiol + S-adenosyl-L-methionine = 2-methoxy-17beta-estradiol + S-adenosyl-L-homocysteine + H(+). Catalyzes the O-methylation, and thereby the inactivation, of catecholamine neurotransmitters and catechol hormones. Also shortens the biological half-lives of certain neuroactive drugs, like L-DOPA, alpha-methyl DOPA and isoproterenol. This Sus scrofa (Pig) protein is Catechol O-methyltransferase (COMT).